The primary structure comprises 120 residues: Large ribosomal subunit protein eL18 (120 aa).

This sequence belongs to the eukaryotic ribosomal protein eL18 family.

This chain is Large ribosomal subunit protein eL18, found in Pyrococcus horikoshii (strain ATCC 700860 / DSM 12428 / JCM 9974 / NBRC 100139 / OT-3).